A 224-amino-acid polypeptide reads, in one-letter code: Respiratory supercomplex factor 2, mitochondrial (224 aa).

Residues 1-13 (MKILTQDEIEAHR) are Mitochondrial intermembrane-facing. The chain crosses the membrane as a helical span at residues 14–38 (SHTLKGGIEGALAGFAISAIIFKVL). At 39-47 (PRRYPKFKP) the chain is on the mitochondrial matrix side. A helical transmembrane segment spans residues 48–75 (STLTWSIKTALWITPPTVLTAICAEEAS). Over 76-103 (NNFDATMYGSGSSSEDALDEHRRWKSLS) the chain is Mitochondrial intermembrane. Residues 89 to 180 (SEDALDEHRR…YENKLHPNKQ (92 aa)) enclose the HIG1 domain. A helical membrane pass occupies residues 104–133 (TKDKFVEGLSNNKYKIITGAWAASLYGSWV). Residues 134–142 (IVNKDPIMT) lie on the Mitochondrial matrix side of the membrane. Residues 143–173 (KAQKIVQARMYAQFITVGLLLASVGLSMYEN) traverse the membrane as a helical segment. The Mitochondrial intermembrane portion of the chain corresponds to 174 to 184 (KLHPNKQKVNE). Residues 185 to 204 (MRRWENALRVAEEEERLEKE) form a helical membrane-spanning segment. Residues 205–224 (GRRTGYVSNEERINSKIFKS) are Mitochondrial matrix-facing.

Associates with a subpopulation of the cytochrome bc1-cytochrome c oxidase supercomplexes. Associates in substoichiometric amounts with complex IV. Interacts with COX3.

Its subcellular location is the mitochondrion membrane. Assembly factor that plays a role in the assembly of the respiratory chain supercomplexes (SCs) composed of ubiquinol-cytochrome c oxidoreductase (cytochrome b-c1 complex, complex III, CIII) and cytochrome c oxidase (complex IV, CIV). May be required for late-stage assembly of the COX12 and COX13 subunits. Required for the generation and maintenance of a normal proton motive force (PMF) across the inner mitochondrial membrane (IMM) by preventing proton leakage through an inactive population of CIV that accumulates when RCF1 and/or RCF2 proteins are absent. In Saccharomyces cerevisiae (strain ATCC 204508 / S288c) (Baker's yeast), this protein is Respiratory supercomplex factor 2, mitochondrial (RCF2).